We begin with the raw amino-acid sequence, 226 residues long: 2-C-methyl-D-erythritol 4-phosphate cytidylyltransferase (226 aa).

This sequence belongs to the IspD/TarI cytidylyltransferase family. IspD subfamily.

The enzyme catalyses 2-C-methyl-D-erythritol 4-phosphate + CTP + H(+) = 4-CDP-2-C-methyl-D-erythritol + diphosphate. It functions in the pathway isoprenoid biosynthesis; isopentenyl diphosphate biosynthesis via DXP pathway; isopentenyl diphosphate from 1-deoxy-D-xylulose 5-phosphate: step 2/6. Catalyzes the formation of 4-diphosphocytidyl-2-C-methyl-D-erythritol from CTP and 2-C-methyl-D-erythritol 4-phosphate (MEP). The protein is 2-C-methyl-D-erythritol 4-phosphate cytidylyltransferase of Prochlorococcus marinus (strain SARG / CCMP1375 / SS120).